A 547-amino-acid polypeptide reads, in one-letter code: Glucose-6-phosphate isomerase (547 aa).

Glu351 functions as the Proton donor in the catalytic mechanism. Residues His382 and Lys510 contribute to the active site.

The protein belongs to the GPI family.

It localises to the cytoplasm. It catalyses the reaction alpha-D-glucose 6-phosphate = beta-D-fructose 6-phosphate. It functions in the pathway carbohydrate biosynthesis; gluconeogenesis. It participates in carbohydrate degradation; glycolysis; D-glyceraldehyde 3-phosphate and glycerone phosphate from D-glucose: step 2/4. In terms of biological role, catalyzes the reversible isomerization of glucose-6-phosphate to fructose-6-phosphate. The chain is Glucose-6-phosphate isomerase from Saccharophagus degradans (strain 2-40 / ATCC 43961 / DSM 17024).